We begin with the raw amino-acid sequence, 87 residues long: Small ribosomal subunit protein bS16 (87 aa).

The protein belongs to the bacterial ribosomal protein bS16 family.

The chain is Small ribosomal subunit protein bS16 from Buchnera aphidicola subsp. Baizongia pistaciae (strain Bp).